A 1193-amino-acid polypeptide reads, in one-letter code: DNA-directed RNA polymerase subunit beta (1193 aa).

A compositionally biased stretch (acidic residues) spans 1149–1162; the sequence is EEEIEMRDLEDEED. Residues 1149-1193 are disordered; that stretch reads EEEIEMRDLEDEEDAKQADGLALSGDEEPEETASADVERDVVTKE. A compositionally biased stretch (basic and acidic residues) spans 1184-1193; the sequence is DVERDVVTKE.

It belongs to the RNA polymerase beta chain family. RNAP is composed of a core of 2 alpha, a beta and a beta' subunit. The core is associated with a delta subunit, and at least one of epsilon or omega. When a sigma factor is associated with the core the holoenzyme is formed, which can initiate transcription.

It carries out the reaction RNA(n) + a ribonucleoside 5'-triphosphate = RNA(n+1) + diphosphate. Its function is as follows. DNA-dependent RNA polymerase catalyzes the transcription of DNA into RNA using the four ribonucleoside triphosphates as substrates. The chain is DNA-directed RNA polymerase subunit beta from Bacillus subtilis (strain 168).